The primary structure comprises 385 residues: MAFRKSNVYLSLVNSYLIDSPQPSTINYWWNLGSLLGLCLVIQILTGIFMAMHYSSNIELAFSSVEHIMRDVQYGWLLRYMHANGASFFFICMYMHIAKGLYYGSYRSPRVTVWIVGVIIFVLTMAAAFLGYCCVYGQMSHWGATVITNLFSAIPFVGQDIVQWLWGGFSVSNPTIQRFFALHYLVPFIIAALVVMHFMALHVHGSSNPLGITGNMDRIGMHGYFIFKDLITVFVFLIFFSLFVFFSPNTLGHPDNYIPGNPLVTPASIVPEWYLLPFYAILRSIPDKLLGVITMFAAILVLLVLPITDRSVVRGNTFKVLSKFFFFLFIFNFLLLGQIGQLHIEPPFVLMGQIATFLYFAYFIIIVPIISTIENVLFYIGRVNN.

4 helical membrane passes run leucine 32–methionine 52, tryptophan 76–alanine 98, valine 113–cysteine 133, and phenylalanine 179–methionine 199. 2 residues coordinate heme b: histidine 82 and histidine 96. The heme b site is built by histidine 183 and histidine 197. A ubiquinone is bound at residue histidine 202. 4 helical membrane passes run phenylalanine 225 to phenylalanine 245, leucine 289 to aspartate 309, leucine 321 to glutamine 341, and phenylalanine 348 to proline 368.

It belongs to the cytochrome b family. As to quaternary structure, fungal cytochrome b-c1 complex contains 10 subunits; 3 respiratory subunits, 2 core proteins and 5 low-molecular weight proteins. Cytochrome b-c1 complex is a homodimer. The cofactor is heme b.

It localises to the mitochondrion inner membrane. Component of the ubiquinol-cytochrome c reductase complex (complex III or cytochrome b-c1 complex) that is part of the mitochondrial respiratory chain. The b-c1 complex mediates electron transfer from ubiquinol to cytochrome c. Contributes to the generation of a proton gradient across the mitochondrial membrane that is then used for ATP synthesis. This Candida glabrata (strain ATCC 2001 / BCRC 20586 / JCM 3761 / NBRC 0622 / NRRL Y-65 / CBS 138) (Yeast) protein is Cytochrome b (COB).